The chain runs to 507 residues: Cytochrome P450 52A7 (507 aa).

Residues 6–26 (LHYWYYVLPAFIIFHWIVSAI) traverse the membrane as a helical segment. Cys-456 contacts heme.

The protein belongs to the cytochrome P450 family. Heme is required as a cofactor.

It is found in the membrane. Together with an NADPH cytochrome P450 the enzyme system catalyzes the terminal hydroxylation as the first step in the assimilation of alkanes and fatty acids. Preferentially hydroxylates lauric acid. This is Cytochrome P450 52A7 (CYP52A7) from Candida tropicalis (Yeast).